We begin with the raw amino-acid sequence, 555 residues long: CTP synthase (555 aa).

The segment at 1 to 265 (MTRYIFITGG…GNRVCEKLNI (265 aa)) is amidoligase domain. Ser-13 contacts CTP. Ser-13 is a UTP binding site. ATP-binding positions include 14–19 (SLGKGI) and Asp-71. 2 residues coordinate Mg(2+): Asp-71 and Glu-139. CTP contacts are provided by residues 146 to 148 (DIE), 186 to 191 (KTKPTQ), and Lys-222. Residues 186 to 191 (KTKPTQ) and Lys-222 contribute to the UTP site. Residues 290-541 (TVAVVGKYVD…IKAGLAAKEA (252 aa)) form the Glutamine amidotransferase type-1 domain. Gly-351 contributes to the L-glutamine binding site. Cys-378 acts as the Nucleophile; for glutamine hydrolysis in catalysis. L-glutamine is bound by residues 379–382 (LGMQ), Glu-402, and Arg-469. Catalysis depends on residues His-514 and Glu-516.

This sequence belongs to the CTP synthase family. In terms of assembly, homotetramer.

It catalyses the reaction UTP + L-glutamine + ATP + H2O = CTP + L-glutamate + ADP + phosphate + 2 H(+). The enzyme catalyses L-glutamine + H2O = L-glutamate + NH4(+). The catalysed reaction is UTP + NH4(+) + ATP = CTP + ADP + phosphate + 2 H(+). It participates in pyrimidine metabolism; CTP biosynthesis via de novo pathway; CTP from UDP: step 2/2. Its activity is regulated as follows. Allosterically activated by GTP, when glutamine is the substrate; GTP has no effect on the reaction when ammonia is the substrate. The allosteric effector GTP functions by stabilizing the protein conformation that binds the tetrahedral intermediate(s) formed during glutamine hydrolysis. Inhibited by the product CTP, via allosteric rather than competitive inhibition. Catalyzes the ATP-dependent amination of UTP to CTP with either L-glutamine or ammonia as the source of nitrogen. Regulates intracellular CTP levels through interactions with the four ribonucleotide triphosphates. The protein is CTP synthase of Coxiella burnetii (strain CbuG_Q212) (Coxiella burnetii (strain Q212)).